We begin with the raw amino-acid sequence, 66 residues long: Protein translocase subunit SecE (66 aa).

The chain crosses the membrane as a helical span at residues leucine 29–valine 49.

Belongs to the SecE/SEC61-gamma family. In terms of assembly, component of the Sec protein translocase complex. Heterotrimer consisting of SecY, SecE and SecG subunits. The heterotrimers can form oligomers, although 1 heterotrimer is thought to be able to translocate proteins. Interacts with the ribosome. Interacts with SecDF, and other proteins may be involved. Interacts with SecA.

Its subcellular location is the cell inner membrane. Functionally, essential subunit of the Sec protein translocation channel SecYEG. Clamps together the 2 halves of SecY. May contact the channel plug during translocation. This Rickettsia typhi (strain ATCC VR-144 / Wilmington) protein is Protein translocase subunit SecE.